Reading from the N-terminus, the 452-residue chain is Elongation factor Tu, mitochondrial (452 aa).

Residues 1-43 (MAAATLLRATPLFSGLGAGPAPLLQGLLRPLKAQALPVLCRGL) constitute a mitochondrion transit peptide. The tr-type G domain maps to 55–251 (KPHVNVGTIG…AVDTYIPVPT (197 aa)). The segment at 64-71 (GHVDHGKT) is G1. Residues D67, G69, K70, T71, and T72 each contribute to the GTP site. T71 contacts Mg(2+). Position 79 is an N6-acetyllysine (K79). Position 88 is an N6-acetyllysine; alternate (K88). K88 bears the N6-succinyllysine; alternate mark. A G2 region spans residues 105-109 (GITIN). Residues 126-129 (DCPG) are G3. The GTP site is built by N181, D184, S219, A220, and L221. Residues 181 to 184 (NKAD) are G4. A G5 region spans residues 219 to 221 (SAL). An N6-succinyllysine modification is found at K234. K256 carries the post-translational modification N6-acetyllysine. Residue T278 is modified to Phosphothreonine. The residue at position 286 (K286) is an N6-succinyllysine. S312 is modified (phosphoserine). An N6-acetyllysine mark is found at K361 and K418.

Belongs to the TRAFAC class translation factor GTPase superfamily. Classic translation factor GTPase family. EF-Tu/EF-1A subfamily. In terms of assembly, interacts with NLRX1. Interacts with ATG16L1.

Its subcellular location is the mitochondrion. It carries out the reaction GTP + H2O = GDP + phosphate + H(+). GTP hydrolase that promotes the GTP-dependent binding of aminoacyl-tRNA to the A-site of ribosomes during protein biosynthesis. Also plays a role in the regulation of autophagy and innate immunity. Recruits ATG5-ATG12 and NLRX1 at mitochondria and serves as a checkpoint of the RIGI-MAVS pathway. In turn, inhibits RLR-mediated type I interferon while promoting autophagy. This is Elongation factor Tu, mitochondrial (TUFM) from Bos taurus (Bovine).